The primary structure comprises 464 residues: ATP synthase subunit beta (464 aa).

ATP is bound at residue 150–157 (GGAGVGKT).

It belongs to the ATPase alpha/beta chains family. In terms of assembly, F-type ATPases have 2 components, CF(1) - the catalytic core - and CF(0) - the membrane proton channel. CF(1) has five subunits: alpha(3), beta(3), gamma(1), delta(1), epsilon(1). CF(0) has three main subunits: a(1), b(2) and c(9-12). The alpha and beta chains form an alternating ring which encloses part of the gamma chain. CF(1) is attached to CF(0) by a central stalk formed by the gamma and epsilon chains, while a peripheral stalk is formed by the delta and b chains.

The protein localises to the cell membrane. The enzyme catalyses ATP + H2O + 4 H(+)(in) = ADP + phosphate + 5 H(+)(out). In terms of biological role, produces ATP from ADP in the presence of a proton gradient across the membrane. The catalytic sites are hosted primarily by the beta subunits. This is ATP synthase subunit beta from Dehalococcoides mccartyi (strain ATCC BAA-2100 / JCM 16839 / KCTC 5957 / BAV1).